A 452-amino-acid polypeptide reads, in one-letter code: UPF0761 membrane protein Bpet3042 (452 aa).

A run of 6 helical transmembrane segments spans residues 56–76, 114–134, 153–173, 195–215, 225–245, and 259–279; these read VLGI…FPVF, LTAI…MTID, ALVY…SLWA, AISF…FVVV, ALVG…AFAY, and AFAT…AVLF.

The protein belongs to the UPF0761 family.

It is found in the cell inner membrane. This Bordetella petrii (strain ATCC BAA-461 / DSM 12804 / CCUG 43448) protein is UPF0761 membrane protein Bpet3042.